Reading from the N-terminus, the 66-residue chain is Opicalcin-1 (66 aa).

The signal sequence occupies residues 1–22 (MKPSLIIVTFIVVFMAISCVAA). Positions 23–31 (DDEQETWIE) are excised as a propeptide. 3 disulfides stabilise this stretch: Cys-36-Cys-50, Cys-43-Cys-54, and Cys-49-Cys-65. Residues 55–57 (KRR) form an essential for stimulation of [3H]ryanodine binding to RYR1 region.

The protein belongs to the scorpion calcin family. In terms of tissue distribution, expressed by the venom gland.

It is found in the secreted. Its function is as follows. This toxin stabilizes ryanodine receptor 1 (RyR1) opening in a long-lasting subconductance state (35% of the full conductance state). Furthermore, it triggers calcium release from sarcoplasmic vesicles (2 nM are enough to induce a sharp release, and 67% of the total calcium is released after toxin (100 nM) addition) probably by acting as a cell-penetrating peptide (CPP). In addition, it has been shown to dose-dependently stimulate ryanodine binding to RyR1 (EC(50)=0.3 nM). It also augments the bell-shaped calcium-[3H]ryanodine binding curve that is maximal at about 10 uM calcium concentration. It binds a different site as ryanodine. It acts synergistically with caffeine. In vivo, intracerebroventricular injection into mice induces neurotoxic symptoms, followed by death. This is Opicalcin-1 from Opistophthalmus carinatus (African yellow leg scorpion).